Reading from the N-terminus, the 474-residue chain is Dihydrolipoyl dehydrogenase (474 aa).

FAD is bound by residues 34–51 (EGNP…GGTC), Lys60, and Gly124. A disulfide bond links Cys51 and Cys56. NAD(+) is bound by residues 189-193 (GAGVI), Glu212, Val246, and 278-281 (SVGR). The FAD site is built by Asp321 and Ala329. His453 (proton acceptor) is an active-site residue.

This sequence belongs to the class-I pyridine nucleotide-disulfide oxidoreductase family. FAD is required as a cofactor.

It is found in the cytoplasm. The enzyme catalyses N(6)-[(R)-dihydrolipoyl]-L-lysyl-[protein] + NAD(+) = N(6)-[(R)-lipoyl]-L-lysyl-[protein] + NADH + H(+). Its function is as follows. The branched-chain alpha-keto dehydrogenase complex catalyzes the overall conversion of alpha-keto acids to acyl-CoA and CO(2). It contains multiple copies of 3 enzymatic components: branched-chain alpha-keto acid decarboxylase (E1), lipoamide acyltransferase (E2) and lipoamide dehydrogenase (E3). The polypeptide is Dihydrolipoyl dehydrogenase (odhL) (Cupriavidus necator (strain ATCC 17699 / DSM 428 / KCTC 22496 / NCIMB 10442 / H16 / Stanier 337) (Ralstonia eutropha)).